The chain runs to 158 residues: Cytochrome c-type biogenesis protein CcmE (158 aa).

Over 1-8 the chain is Cytoplasmic; it reads MNIRRRRR. The chain crosses the membrane as a helical; Signal-anchor for type II membrane protein span at residues 9–29; it reads LLVVVAILVGLGLATGLVMYA. Topologically, residues 30 to 158 are periplasmic; it reads LRSNIDLFYT…GLLNVSEPTR (129 aa). Heme is bound by residues His130 and Tyr134.

It belongs to the CcmE/CycJ family.

It localises to the cell inner membrane. In terms of biological role, heme chaperone required for the biogenesis of c-type cytochromes. Transiently binds heme delivered by CcmC and transfers the heme to apo-cytochromes in a process facilitated by CcmF and CcmH. In Tatumella citrea (Pantoea citrea), this protein is Cytochrome c-type biogenesis protein CcmE.